Consider the following 111-residue polypeptide: SPbeta prophage-derived uncharacterized protein YopW (111 aa).

This Bacillus subtilis (strain 168) protein is SPbeta prophage-derived uncharacterized protein YopW (yopW).